The primary structure comprises 101 residues: Ribonuclease kappa-A (101 aa).

The next 2 helical transmembrane spans lie at 13 to 33 and 68 to 88; these read ACGI…GVFF and VSYN…FSFC.

This sequence belongs to the RNase K family.

It localises to the membrane. Functionally, endoribonuclease which preferentially cleaves ApU and ApG phosphodiester bonds. The polypeptide is Ribonuclease kappa-A (rnasek-a) (Xenopus laevis (African clawed frog)).